The sequence spans 277 residues: 2-dehydro-3-deoxyphosphooctonate aldolase (277 aa).

This sequence belongs to the KdsA family.

The protein localises to the cytoplasm. The catalysed reaction is D-arabinose 5-phosphate + phosphoenolpyruvate + H2O = 3-deoxy-alpha-D-manno-2-octulosonate-8-phosphate + phosphate. It functions in the pathway carbohydrate biosynthesis; 3-deoxy-D-manno-octulosonate biosynthesis; 3-deoxy-D-manno-octulosonate from D-ribulose 5-phosphate: step 2/3. It participates in bacterial outer membrane biogenesis; lipopolysaccharide biosynthesis. This is 2-dehydro-3-deoxyphosphooctonate aldolase from Hydrogenovibrio crunogenus (strain DSM 25203 / XCL-2) (Thiomicrospira crunogena).